A 608-amino-acid chain; its full sequence is FAD-binding monooxygenase ktnD (608 aa).

N-linked (GlcNAc...) asparagine glycosylation occurs at Asn-4. A helical transmembrane segment spans residues 17–37 (ATVVIIGAGVSGMCMAIDLLH). FAD-binding positions include 56–59 (TWAN), 68–69 (DV), and Tyr-74. 66–68 (ASD) is an NADP(+) binding site. The N-linked (GlcNAc...) asparagine glycan is linked to Asn-114. NADP(+) contacts are provided by residues 201–207 (NGASAIQ) and 224–225 (RS). Residue Asn-325 is glycosylated (N-linked (GlcNAc...) asparagine). A helical transmembrane segment spans residues 535–555 (ALVSNVTLFLGVALAAGGVYW).

The protein belongs to the FAD-binding monooxygenase family. Requires FAD as cofactor.

The protein localises to the membrane. In terms of biological role, non-reducing polyketide synthase; part of the gene cluster that mediates the biosynthesis of the bicoumarin kotanin. The non-reducing polyketide synthase ktnS first catalyzes the formation of the pentaketidic 4,7-dihydroxy-5-methylcoumarin from acetyl coenzyme A and 4 malonyl coenzyme A molecules. Further O-methylation by ktnB leads to the formation of 7-demethylsiderin. Then, an oxidative phenol coupling catalyzed by the cytochrome P450 monooxygenase ktnC forms the 8,8'-dimer P-orlandin via dimerization the monomeric precursor, 7-demethylsiderin. P-orlandin is subsequently O-methylated in a stepwise fashion to demethylkotanin and kotanin. The function of ktnD within the pathway has not been determined yet. The protein is FAD-binding monooxygenase ktnD of Aspergillus niger (strain ATCC MYA-4892 / CBS 513.88 / FGSC A1513).